A 25-amino-acid chain; its full sequence is Small ribosomal subunit protein eS32 (25 aa).

A disordered region spans residues 1-25 (MREKWKKKRSRRLRRKRRKMRARSK).

The protein belongs to the eukaryotic ribosomal protein eS32 family. Component of the large ribosomal subunit.

This is Small ribosomal subunit protein eS32 (rpl41) from Agaricus bisporus (White button mushroom).